Reading from the N-terminus, the 211-residue chain is Imidazole glycerol phosphate synthase subunit HisH (211 aa).

Residues 3–211 (VIAVIDYDMG…VNQIRVKAIA (209 aa)) form the Glutamine amidotransferase type-1 domain. C81 acts as the Nucleophile in catalysis. Catalysis depends on residues H186 and E188.

Heterodimer of HisH and HisF.

The protein localises to the cytoplasm. It carries out the reaction 5-[(5-phospho-1-deoxy-D-ribulos-1-ylimino)methylamino]-1-(5-phospho-beta-D-ribosyl)imidazole-4-carboxamide + L-glutamine = D-erythro-1-(imidazol-4-yl)glycerol 3-phosphate + 5-amino-1-(5-phospho-beta-D-ribosyl)imidazole-4-carboxamide + L-glutamate + H(+). The enzyme catalyses L-glutamine + H2O = L-glutamate + NH4(+). It participates in amino-acid biosynthesis; L-histidine biosynthesis; L-histidine from 5-phospho-alpha-D-ribose 1-diphosphate: step 5/9. Its function is as follows. IGPS catalyzes the conversion of PRFAR and glutamine to IGP, AICAR and glutamate. The HisH subunit catalyzes the hydrolysis of glutamine to glutamate and ammonia as part of the synthesis of IGP and AICAR. The resulting ammonia molecule is channeled to the active site of HisF. The protein is Imidazole glycerol phosphate synthase subunit HisH of Gloeothece citriformis (strain PCC 7424) (Cyanothece sp. (strain PCC 7424)).